Here is a 760-residue protein sequence, read N- to C-terminus: Catalase-peroxidase (760 aa).

The signal sequence occupies residues 1–45; the sequence is MKGTPFRSPHLYQEGSSCMHRTIRSVAAVLTVVLSATIPMVPAWS. Residues 124–245 constitute a cross-link (tryptophyl-tyrosyl-methioninium (Trp-Tyr) (with M-271)); the sequence is WHGAGTYRTY…LAATQMGLIY (122 aa). His125 (proton acceptor) is an active-site residue. The tryptophyl-tyrosyl-methioninium (Tyr-Met) (with W-124) cross-link spans 245 to 271; the sequence is YVNPEGPNGVPDPVAAARDIREAFGGM. Heme b is bound at residue His286.

This sequence belongs to the peroxidase family. Peroxidase/catalase subfamily. In terms of assembly, homodimer or homotetramer. Heme b serves as cofactor. In terms of processing, formation of the three residue Trp-Tyr-Met cross-link is important for the catalase, but not the peroxidase activity of the enzyme.

The enzyme catalyses H2O2 + AH2 = A + 2 H2O. It carries out the reaction 2 H2O2 = O2 + 2 H2O. Bifunctional enzyme with both catalase and broad-spectrum peroxidase activity. In Granulibacter bethesdensis (strain ATCC BAA-1260 / CGDNIH1), this protein is Catalase-peroxidase.